We begin with the raw amino-acid sequence, 252 residues long: Cell division protein ZapD (252 aa).

This sequence belongs to the ZapD family. Interacts with FtsZ.

It is found in the cytoplasm. Cell division factor that enhances FtsZ-ring assembly. Directly interacts with FtsZ and promotes bundling of FtsZ protofilaments, with a reduction in FtsZ GTPase activity. In Chromobacterium violaceum (strain ATCC 12472 / DSM 30191 / JCM 1249 / CCUG 213 / NBRC 12614 / NCIMB 9131 / NCTC 9757 / MK), this protein is Cell division protein ZapD.